Reading from the N-terminus, the 405-residue chain is Imidazolonepropionase (405 aa).

Fe(3+) is bound by residues H72 and H74. The Zn(2+) site is built by H72 and H74. The 4-imidazolone-5-propanoate site is built by R81, Y144, and H177. Y144 contributes to the N-formimidoyl-L-glutamate binding site. Fe(3+) is bound at residue H242. Zn(2+) is bound at residue H242. 4-imidazolone-5-propanoate is bound at residue Q245. Residue D317 coordinates Fe(3+). Zn(2+) is bound at residue D317. N319 and G321 together coordinate N-formimidoyl-L-glutamate. T322 is a binding site for 4-imidazolone-5-propanoate.

Belongs to the metallo-dependent hydrolases superfamily. HutI family. Zn(2+) is required as a cofactor. Requires Fe(3+) as cofactor.

Its subcellular location is the cytoplasm. The enzyme catalyses 4-imidazolone-5-propanoate + H2O = N-formimidoyl-L-glutamate. It functions in the pathway amino-acid degradation; L-histidine degradation into L-glutamate; N-formimidoyl-L-glutamate from L-histidine: step 3/3. In terms of biological role, catalyzes the hydrolytic cleavage of the carbon-nitrogen bond in imidazolone-5-propanoate to yield N-formimidoyl-L-glutamate. It is the third step in the universal histidine degradation pathway. In Klebsiella pneumoniae (strain 342), this protein is Imidazolonepropionase.